The chain runs to 698 residues: Dolichyl-diphosphooligosaccharide--protein glycosyltransferase subunit 2 (698 aa).

Positions 1–29 are cleaved as a signal peptide; sequence MAAAGGLPASATLLLLVIAAVAVAPLASA. The Lumenal portion of the chain corresponds to 30–600; that stretch reads VRPVSDAHRS…RSPEKRPPKE (571 aa). Residues 601 to 621 traverse the membrane as a helical segment; sequence LSFAFTGLTLLPIVGFLIGLM. Residues 622-638 are Cytoplasmic-facing; it reads RLGVNLKNFPSLPAPAA. A helical transmembrane segment spans residues 639 to 659; sequence FASLFHAGIGAVLLLYVLFWI. K660 is a topological domain (lumenal). The chain crosses the membrane as a helical span at residues 661 to 681; the sequence is LDLFTTLKYLSFLGVFLVFVG. At 682-698 the chain is on the cytoplasmic side; sequence HRALSYLSSTSAKQKTA.

The protein belongs to the SWP1 family. As to quaternary structure, component of the oligosaccharyltransferase (OST) complex.

It is found in the endoplasmic reticulum membrane. The protein operates within protein modification; protein glycosylation. Functionally, subunit of the oligosaccharyl transferase (OST) complex that catalyzes the initial transfer of a defined glycan (Glc(3)Man(9)GlcNAc(2) in eukaryotes) from the lipid carrier dolichol-pyrophosphate to an asparagine residue within an Asn-X-Ser/Thr consensus motif in nascent polypeptide chains, the first step in protein N-glycosylation. N-glycosylation occurs cotranslationally and the complex associates with the Sec61 complex at the channel-forming translocon complex that mediates protein translocation across the endoplasmic reticulum (ER). All subunits are required for a maximal enzyme activity. In Oryza sativa subsp. japonica (Rice), this protein is Dolichyl-diphosphooligosaccharide--protein glycosyltransferase subunit 2 (RPN2).